The following is a 297-amino-acid chain: Pyrroline-5-carboxylate reductase 1 (297 aa).

It belongs to the pyrroline-5-carboxylate reductase family.

Its subcellular location is the cytoplasm. The enzyme catalyses L-proline + NADP(+) = (S)-1-pyrroline-5-carboxylate + NADPH + 2 H(+). The catalysed reaction is L-proline + NAD(+) = (S)-1-pyrroline-5-carboxylate + NADH + 2 H(+). Its pathway is amino-acid biosynthesis; L-proline biosynthesis; L-proline from L-glutamate 5-semialdehyde: step 1/1. In terms of biological role, catalyzes the reduction of 1-pyrroline-5-carboxylate (PCA) to L-proline. The protein is Pyrroline-5-carboxylate reductase 1 (proH) of Bacillus spizizenii (strain ATCC 23059 / NRRL B-14472 / W23) (Bacillus subtilis subsp. spizizenii).